A 173-amino-acid polypeptide reads, in one-letter code: Adenine phosphoribosyltransferase (173 aa).

This sequence belongs to the purine/pyrimidine phosphoribosyltransferase family. As to quaternary structure, homodimer.

It localises to the cytoplasm. It catalyses the reaction AMP + diphosphate = 5-phospho-alpha-D-ribose 1-diphosphate + adenine. The protein operates within purine metabolism; AMP biosynthesis via salvage pathway; AMP from adenine: step 1/1. Catalyzes a salvage reaction resulting in the formation of AMP, that is energically less costly than de novo synthesis. This Chloroflexus aurantiacus (strain ATCC 29366 / DSM 635 / J-10-fl) protein is Adenine phosphoribosyltransferase.